A 68-amino-acid chain; its full sequence is MARITVEDCLQQIPNRFLLVMVAAKRTKQLYKGGQPLIENKSNNKRVVHCLREIAAGKVDYEIPARKA.

It belongs to the RNA polymerase subunit omega family. The RNAP catalytic core consists of 2 alpha, 1 beta, 1 beta' and 1 omega subunit. When a sigma factor is associated with the core the holoenzyme is formed, which can initiate transcription.

The enzyme catalyses RNA(n) + a ribonucleoside 5'-triphosphate = RNA(n+1) + diphosphate. In terms of biological role, promotes RNA polymerase assembly. Latches the N- and C-terminal regions of the beta' subunit thereby facilitating its interaction with the beta and alpha subunits. The protein is DNA-directed RNA polymerase subunit omega of Syntrophotalea carbinolica (strain DSM 2380 / NBRC 103641 / GraBd1) (Pelobacter carbinolicus).